The chain runs to 63 residues: Overexpressed in colon carcinoma 1 protein homolog (63 aa).

The segment covering 1–10 has biased composition (polar residues); the sequence is MGCGNSTATS. The interval 1–37 is disordered; it reads MGCGNSTATSAAAGRGKPGAVKDATEDSITEDDKRRN.

It belongs to the OCC1 family.

This is Overexpressed in colon carcinoma 1 protein homolog from Rattus norvegicus (Rat).